We begin with the raw amino-acid sequence, 258 residues long: Short-chain dehydrogenase/reductase FrzI (258 aa).

Positions 21, 41, and 94 each coordinate NADP(+). Active-site proton donor residues include S143 and S144. Residues Y157, K161, V191, and T193 each contribute to the NADP(+) site. Y157 acts as the Proton acceptor in catalysis. The active-site Lowers pKa of active site Tyr is the K161.

This sequence belongs to the short-chain dehydrogenases/reductases (SDR) family.

It catalyses the reaction (1S,3S,6S,7S,8R)-7-hydroxy-6-[(4-methoxyphenyl)methyl]-3-(methylamino)-5-azatricyclo[6.3.1.0(1,5)]dodecan-9-one + NADPH + H(+) = (1S,3S,6S,7S,8S,9S)-6-[(4-methoxyphenyl)methyl]-3-(methylamino)-5-azatricyclo[6.3.1.0(1,5)]dodecane-7,9-diol + NADP(+). Its pathway is secondary metabolite biosynthesis. In terms of biological role, short-chain dehydrogenase/reductase; part of the gene cluster that mediates the biosynthesis of the alkaloid (-)-FR901483, a potent immunosuppressant that shows efficacy in animal models and a probable inhibitor of purine nucleotide biosynthesis by targeting phosphoribosylpyrophosphate amidotransferase (PPAT). Within the pathway, FrzI catalyzes the formation of dephospho-(-)-FR901483 from the aza-tricyclic intermediate produced by FrzH. The biosynthesis of (-)-FR901483 starts with the condensation of two L-tyrosines to yield (S,S)-dityrosyl-piperazine. This process occurs in 3 steps with the non-canonical nonribosomal peptide synthetase FrzA catalyzing the reduction of L-tyrosine into L-tyrosinal, the spontaneous condensation of 2 L-tyrosinal units, and the subsequent reduction by the NmrA-like family domain-containing oxidoreductase FrzB. The cytochrome P450 monooxygenase FrzC then performs coupling between N10 and C1' to morph the piperazine into a 1,4-diazabicyclo[3.2.1]octane spiro-fused to a 2,5-cyclohexadienone. The dienone portion is further reduced to cyclohexanone by the flavin-dependent reductase FrzD. The methyltranserases (MTs) FrzE and FrzF are then involved in the methylation at the C10' amine and the C4 phenolic oxygen, respectively. The order of the two MTs appear to be interchangeable. Cleavage of the C9-N10' bond by the dioxygenase FrzG then leads to formation of a conjugated iminium. In addition to the oxidation of C9, an additional dehydrogenation between C7 and C8 can occur to give a likely shunt product. The next biosynthetic step is the intramolecular aldol condensation catalyzed by the newly identified aldolase FrzH to yield an aza-tricyclic product with the formation of a C9-C3' bond. The short-chain dehydrogenase/reductase FrzI then produces dephospho-(-)-FR901483 that is phosphorylated at C4'-OH into (-)-FR901483 by the phosphotransferase FrzJ. The chain is Short-chain dehydrogenase/reductase FrzI from Cladobotryum sp.